A 289-amino-acid polypeptide reads, in one-letter code: ATP synthase subunit a (289 aa).

6 consecutive transmembrane segments (helical) span residues 43-63 (AFHLDTLGWSVALGLIFLLIF), 104-124 (IAPLALTIFVWVFLMNAVDLI), 160-180 (FCVFALIIFYSIKVKGLGGFI), 193-213 (IFVQILLIPVNFLLEFVTLIA), 232-252 (VFILIAVMFGSGLLWLSGLGV), and 259-279 (AVFHILIITLQAFIFMMLTIV).

The protein belongs to the ATPase A chain family. In terms of assembly, F-type ATPases have 2 components, CF(1) - the catalytic core - and CF(0) - the membrane proton channel. CF(1) has five subunits: alpha(3), beta(3), gamma(1), delta(1), epsilon(1). CF(0) has three main subunits: a(1), b(2) and c(9-12). The alpha and beta chains form an alternating ring which encloses part of the gamma chain. CF(1) is attached to CF(0) by a central stalk formed by the gamma and epsilon chains, while a peripheral stalk is formed by the delta and b chains.

The protein resides in the cell inner membrane. Key component of the proton channel; it plays a direct role in the translocation of protons across the membrane. The sequence is that of ATP synthase subunit a from Pseudomonas putida (strain ATCC 47054 / DSM 6125 / CFBP 8728 / NCIMB 11950 / KT2440).